Reading from the N-terminus, the 448-residue chain is Antizyme inhibitor 1 (448 aa).

The protein belongs to the Orn/Lys/Arg decarboxylase class-II family. ODC antizyme inhibitor subfamily. As to quaternary structure, monomer. Interacts with OAZ1 and OAZ3; this interaction disrupts the interaction between the antizyme and ODC1. Ubiquitinated, leading to its proteasomal degradation; a process that is reduced in presence of antizyme OAZ1.

Its subcellular location is the nucleus. In terms of biological role, antizyme inhibitor (AZI) protein that positively regulates ornithine decarboxylase (ODC) activity and polyamine uptake. AZI is an enzymatically inactive ODC homolog that counteracts the negative effect of ODC antizymes (AZs) OAZ1, OAZ2 and OAZ3 on ODC activity by competing with ODC for antizyme-binding. Inhibits antizyme-dependent ODC degradation and releases ODC monomers from their inactive complex with antizymes, leading to formation of the catalytically active ODC homodimer and restoring polyamine production. This chain is Antizyme inhibitor 1 (AZIN1), found in Pongo abelii (Sumatran orangutan).